A 725-amino-acid polypeptide reads, in one-letter code: DNA replication licensing factor MCM7 (725 aa).

In terms of domain architecture, MCM spans 333-538 (IYNKLARSLA…METDLEMARH (206 aa)). Residue 383-390 (GDPGVAKS) coordinates ATP. An Arginine finger motif is present at residues 515–518 (SRFD).

The protein belongs to the MCM family. Component of the minichromosome maintenance (MCM) complex, a heterotetramer composed of MCM2, MCM3, MCM4, MCM5, MCM6 and MCM7.

The protein localises to the nucleus. It catalyses the reaction ATP + H2O = ADP + phosphate + H(+). In terms of biological role, probable component of the MCM2-7 complex (MCM complex) that may function as a DNA helicase and which is essential to undergo a single round of replication initiation and elongation per cell cycle in eukaryotic cells. This is DNA replication licensing factor MCM7 (MCM7) from Oryza sativa subsp. indica (Rice).